The sequence spans 168 residues: Large ribosomal subunit protein bL17 (168 aa).

Positions 124–168 (QATGEAEAATKRAAKDAEGSAEVSEAKVDTTKADDEAAAEESKDA) are disordered. Residues 131-168 (AATKRAAKDAEGSAEVSEAKVDTTKADDEAAAEESKDA) show a composition bias toward basic and acidic residues.

The protein belongs to the bacterial ribosomal protein bL17 family. As to quaternary structure, part of the 50S ribosomal subunit. Contacts protein L32.

The chain is Large ribosomal subunit protein bL17 from Streptomyces coelicolor (strain ATCC BAA-471 / A3(2) / M145).